The chain runs to 149 residues: Calmodulin-B (149 aa).

An N-acetylalanine modification is found at A2. EF-hand domains follow at residues 8-43 (EQIAEFKEAFSLFDKDGDGTITTKELGTVMRSLGQN), 44-79 (PTEAELQDMINEVDADGNGTIDFPEFLTMMARKMKE), 81-116 (DSEEEIREAFRVFDKDGNGFISAAELRHVMTNLGEK), and 117-149 (LTDEEVDEMIREADIDGDGQVNYEEFVTMMTCK). D21, D23, D25, T27, E32, D57, D59, N61, T63, E68, D94, D96, N98, and E105 together coordinate Ca(2+). K116 is modified (N6,N6,N6-trimethyllysine). Ca(2+)-binding residues include D130, D132, D134, Q136, and E141.

Belongs to the calmodulin family.

Calmodulin mediates the control of a large number of enzymes, ion channels and other proteins by Ca(2+). Among the enzymes to be stimulated by the calmodulin-Ca(2+) complex are a number of protein kinases and phosphatases. The polypeptide is Calmodulin-B (Halocynthia roretzi (Sea squirt)).